The sequence spans 127 residues: Protein ApaG (127 aa).

One can recognise an ApaG domain in the interval 3 to 127; it reads DDPRYRVEVE…FVLSVPRTLH (125 aa).

The protein is Protein ApaG of Xanthomonas oryzae pv. oryzae (strain MAFF 311018).